The sequence spans 570 residues: uncharacterized protein (570 aa).

The span at 1 to 15 shows a compositional bias: low complexity; that stretch reads MTESIISSRTASISS. A disordered region spans residues 1–34; the sequence is MTESIISSRTASISSKEGYEIRQGSTDSSSLDLE. Position 14 is a phosphoserine (Ser14). 12 consecutive transmembrane segments (helical) span residues 96 to 116, 141 to 161, 163 to 183, 198 to 218, 229 to 249, 261 to 281, 328 to 348, 369 to 389, 397 to 417, 423 to 443, 457 to 477, and 485 to 505; these read WKLY…LFIG, NLNT…HYIM, TFPL…IVFL, FFLG…MGMF, PVFW…AYGL, LFMI…FFYY, PITW…NLAY, VALA…MYLI, AMFW…LPWS, LATM…LGWT, GLMF…LWQS, and PAWI…YLVA.

It belongs to the major facilitator superfamily. Allantoate permease family.

It localises to the endoplasmic reticulum. The protein resides in the membrane. This is an uncharacterized protein from Schizosaccharomyces pombe (strain 972 / ATCC 24843) (Fission yeast).